Here is a 354-residue protein sequence, read N- to C-terminus: Endo-1,4-beta-xylanase 1 (354 aa).

Residues 19 to 339 (SGLDAAMKAA…KPSYTSSLNT (321 aa)) enclose the GH10 domain. Asn-117 carries N-linked (GlcNAc...) asparagine glycosylation. Residue Glu-147 is the Proton donor of the active site. The active-site Nucleophile is Glu-261. Cys-289 and Cys-295 are disulfide-bonded.

This sequence belongs to the glycosyl hydrolase 10 (cellulase F) family.

The protein localises to the secreted. The catalysed reaction is Endohydrolysis of (1-&gt;4)-beta-D-xylosidic linkages in xylans.. The protein operates within glycan degradation; xylan degradation. Its function is as follows. Endo-1,4-beta-xylanase involved in the hydrolysis of xylan, a major structural heterogeneous polysaccharide found in plant biomass representing the second most abundant polysaccharide in the biosphere, after cellulose. Plays an important role in causing fusarium head blight (FHB) on cereal crops. The sequence is that of Endo-1,4-beta-xylanase 1 (XYL1) from Gibberella zeae (strain ATCC MYA-4620 / CBS 123657 / FGSC 9075 / NRRL 31084 / PH-1) (Wheat head blight fungus).